We begin with the raw amino-acid sequence, 83 residues long: Apolipoprotein C-I, acidic form (83 aa).

The signal sequence occupies residues Met-1 to Gly-26.

Belongs to the apolipoprotein C1 family.

Its subcellular location is the secreted. The sequence is that of Apolipoprotein C-I, acidic form (APOC1A) from Gorilla gorilla gorilla (Western lowland gorilla).